The primary structure comprises 495 residues: N-succinylglutamate 5-semialdehyde dehydrogenase (495 aa).

G228–G233 is a binding site for NAD(+). Catalysis depends on residues E251 and C285.

It belongs to the aldehyde dehydrogenase family. AstD subfamily.

The enzyme catalyses N-succinyl-L-glutamate 5-semialdehyde + NAD(+) + H2O = N-succinyl-L-glutamate + NADH + 2 H(+). The protein operates within amino-acid degradation; L-arginine degradation via AST pathway; L-glutamate and succinate from L-arginine: step 4/5. Functionally, catalyzes the NAD-dependent reduction of succinylglutamate semialdehyde into succinylglutamate. The protein is N-succinylglutamate 5-semialdehyde dehydrogenase of Legionella pneumophila (strain Corby).